The following is a 272-amino-acid chain: HMP-PP phosphatase (272 aa).

Asp-8 acts as the Nucleophile in catalysis. Mg(2+)-binding residues include Asp-8, Asp-10, and Asp-212.

It belongs to the HAD-like hydrolase superfamily. Cof family. Requires Mg(2+) as cofactor.

The enzyme catalyses 4-amino-2-methyl-5-(diphosphooxymethyl)pyrimidine + H2O = 4-amino-2-methyl-5-(phosphooxymethyl)pyrimidine + phosphate + H(+). Its function is as follows. Catalyzes the hydrolysis of 4-amino-2-methyl-5-hydroxymethylpyrimidine pyrophosphate (HMP-PP) to 4-amino-2-methyl-5-hydroxymethylpyrimidine phosphate (HMP-P). This is HMP-PP phosphatase from Salmonella typhi.